The primary structure comprises 289 residues: ATP synthase gamma chain (289 aa).

It belongs to the ATPase gamma chain family. In terms of assembly, F-type ATPases have 2 components, CF(1) - the catalytic core - and CF(0) - the membrane proton channel. CF(1) has five subunits: alpha(3), beta(3), gamma(1), delta(1), epsilon(1). CF(0) has three main subunits: a, b and c.

Its subcellular location is the cell membrane. Its function is as follows. Produces ATP from ADP in the presence of a proton gradient across the membrane. The gamma chain is believed to be important in regulating ATPase activity and the flow of protons through the CF(0) complex. The chain is ATP synthase gamma chain from Alkaliphilus metalliredigens (strain QYMF).